The chain runs to 223 residues: Deoxyribose-phosphate aldolase (223 aa).

Asp89 serves as the catalytic Proton donor/acceptor. Residue Lys152 is the Schiff-base intermediate with acetaldehyde of the active site. Catalysis depends on Lys181, which acts as the Proton donor/acceptor.

The protein belongs to the DeoC/FbaB aldolase family. DeoC type 1 subfamily.

Its subcellular location is the cytoplasm. The catalysed reaction is 2-deoxy-D-ribose 5-phosphate = D-glyceraldehyde 3-phosphate + acetaldehyde. Its pathway is carbohydrate degradation; 2-deoxy-D-ribose 1-phosphate degradation; D-glyceraldehyde 3-phosphate and acetaldehyde from 2-deoxy-alpha-D-ribose 1-phosphate: step 2/2. In terms of biological role, catalyzes a reversible aldol reaction between acetaldehyde and D-glyceraldehyde 3-phosphate to generate 2-deoxy-D-ribose 5-phosphate. This chain is Deoxyribose-phosphate aldolase, found in Bacillus cytotoxicus (strain DSM 22905 / CIP 110041 / 391-98 / NVH 391-98).